The primary structure comprises 152 residues: SsrA-binding protein (152 aa).

Belongs to the SmpB family.

It localises to the cytoplasm. In terms of biological role, required for rescue of stalled ribosomes mediated by trans-translation. Binds to transfer-messenger RNA (tmRNA), required for stable association of tmRNA with ribosomes. tmRNA and SmpB together mimic tRNA shape, replacing the anticodon stem-loop with SmpB. tmRNA is encoded by the ssrA gene; the 2 termini fold to resemble tRNA(Ala) and it encodes a 'tag peptide', a short internal open reading frame. During trans-translation Ala-aminoacylated tmRNA acts like a tRNA, entering the A-site of stalled ribosomes, displacing the stalled mRNA. The ribosome then switches to translate the ORF on the tmRNA; the nascent peptide is terminated with the 'tag peptide' encoded by the tmRNA and targeted for degradation. The ribosome is freed to recommence translation, which seems to be the essential function of trans-translation. The polypeptide is SsrA-binding protein (Helicobacter acinonychis (strain Sheeba)).